A 655-amino-acid polypeptide reads, in one-letter code: Spastin (655 aa).

The Cytoplasmic portion of the chain corresponds to 1–58 (MLFDLINSFLKNGINNSNNNNNNNNNKNNFYNSLEDDDYLLNNQTTKVSLYLYFFIFA). Positions 59-79 (FMFLVVDLIMLYYKHRENIES) form an intramembrane region, helical. Topologically, residues 80–655 (RETDLSLKLN…EKWNQKFGTI (576 aa)) are cytoplasmic. Residues 102-140 (KSSPTTSTTTTTITPTTTSSSQLRQPSTPKTTTKTINSP) show a composition bias toward low complexity. The segment at 102–151 (KSSPTTSTTTTTITPTTTSSSQLRQPSTPKTTTKTINSPPSTPKSPPPLP) is disordered. Over residues 141–151 (PSTPKSPPPLP) the composition is skewed to pro residues. One can recognise an MIT domain in the interval 169–232 (LNEAKSQIDS…KRAEYLKNEL (64 aa)). The disordered stretch occupies residues 261 to 325 (EQQQQQQQQS…TITSPGNKYG (65 aa)). A compositionally biased stretch (low complexity) spans 262-320 (QQQQQQQQSSSTYRNSLNLSSSKSNSTINNRHSISSLSSLNSTTATTTTPSNTSTITSP). ATP is bound at residue 424–431 (GPPGNGKT).

Belongs to the AAA ATPase family. Spastin subfamily. As to quaternary structure, homohexamer. The homohexamer is stabilized by ATP-binding. The homohexamer may adopt a ring conformation through which microtubules pass prior to being severed. Interacts with microtubules.

Its subcellular location is the membrane. It localises to the cytoplasm. It is found in the cytoskeleton. The protein localises to the microtubule organizing center. The protein resides in the centrosome. It carries out the reaction n ATP + n H2O + a microtubule = n ADP + n phosphate + (n+1) alpha/beta tubulin heterodimers.. In terms of biological role, ATP-dependent microtubule severing protein. Microtubule severing may promote reorganization of cellular microtubule arrays and the release of microtubules from the microtubule organizing center following nucleation. The sequence is that of Spastin from Dictyostelium discoideum (Social amoeba).